Consider the following 204-residue polypeptide: Large ribosomal subunit protein bL25 (204 aa).

Belongs to the bacterial ribosomal protein bL25 family. CTC subfamily. As to quaternary structure, part of the 50S ribosomal subunit; part of the 5S rRNA/L5/L18/L25 subcomplex. Contacts the 5S rRNA. Binds to the 5S rRNA independently of L5 and L18.

In terms of biological role, this is one of the proteins that binds to the 5S RNA in the ribosome where it forms part of the central protuberance. This chain is Large ribosomal subunit protein bL25, found in Burkholderia pseudomallei (strain 668).